Reading from the N-terminus, the 315-residue chain is MVKFQIIARDFYHGFIDSFKGITFVRRIREEEAKEVKVEPPKPVERTVLMMRREKQGIFKRPPEPPKKKDSFLKKLWQIYAMNIGFLVLWQVCILILGLFFSFFDRTDLGHNIGYILIIPIFFASRIIQALWFSDISGACMRALKLPPPPVVPFSSMLAGTLISALHQIFFLIQGMLSQYLPIPLITPVIVYLHMALLNSMYCFDYFFDGYNLSFLRRKDIFESHWPYFLGFGTPLALACSISSNMFVNSVIFALLFPFFIITSYPANWNRKYEEEIPKIAFCRISYMFTELVGKFVKSITPTNNPTAARNNAQN.

6 consecutive transmembrane segments (helical) span residues 84 to 104 (IGFL…FSFF), 113 to 133 (IGYI…ALWF), 146 to 166 (LPPP…ISAL), 190 to 210 (IVYL…FFDG), 221 to 241 (IFES…LACS), and 242 to 262 (ISSN…FFII).

Belongs to the EI24 family. In terms of tissue distribution, expressed in pharyngeal and body wall muscles and intestine cells.

It localises to the cytoplasm. It is found in the membrane. In terms of biological role, involved in autophagy. Thought to act in autophagasome and omegasome formation. The sequence is that of Ectopic P granules protein 4 from Caenorhabditis elegans.